A 90-amino-acid chain; its full sequence is MPRSVKKGPFVDHHLVKKVMEAQESGNKRPIKTWSRRSMILPDMIGLTIAVHNGKEHIPVYVSENMVGHKLGEFSMTRTYRGHAADKKSK.

The protein belongs to the universal ribosomal protein uS19 family.

Functionally, protein S19 forms a complex with S13 that binds strongly to the 16S ribosomal RNA. The sequence is that of Small ribosomal subunit protein uS19 from Hydrogenovibrio crunogenus (strain DSM 25203 / XCL-2) (Thiomicrospira crunogena).